A 21-amino-acid polypeptide reads, in one-letter code: Large ribosomal subunit protein uL30 (21 aa).

Residues 1 to 15 (AKTENKTVTVRQTAS) show a composition bias toward polar residues. The tract at residues 1 to 21 (AKTENKTVTVRQTASPIXXXK) is disordered.

It belongs to the universal ribosomal protein uL30 family. As to quaternary structure, part of the 50S ribosomal subunit.

In Brevundimonas diminuta (Pseudomonas diminuta), this protein is Large ribosomal subunit protein uL30 (rpmD).